The chain runs to 411 residues: [Pyruvate dehydrogenase (acetyl-transferring)] kinase isozyme 4, mitochondrial (411 aa).

The Histidine kinase domain occupies 138-368; it reads IIEYKDACTV…DAIIYLKALS (231 aa). ATP contacts are provided by residues 254 to 261, Asp293, 312 to 313, and 329 to 334; these read ELFKNAMR, ST, and GFGYGL.

This sequence belongs to the PDK/BCKDK protein kinase family. Homodimer. Interacts with the pyruvate dehydrogenase complex subunit DLAT, and is part of the multimeric pyruvate dehydrogenase complex that contains multiple copies of pyruvate dehydrogenase (E1), dihydrolipoamide acetyltransferase (DLAT, E2) and lipoamide dehydrogenase (DLD, E3). As to expression, ubiquitous; highest levels of expression in heart and skeletal muscle.

It is found in the mitochondrion matrix. The catalysed reaction is L-seryl-[pyruvate dehydrogenase E1 alpha subunit] + ATP = O-phospho-L-seryl-[pyruvate dehydrogenase E1 alpha subunit] + ADP + H(+). Its function is as follows. Kinase that plays a key role in regulation of glucose and fatty acid metabolism and homeostasis via phosphorylation of the pyruvate dehydrogenase subunits PDHA1 and PDHA2. This inhibits pyruvate dehydrogenase activity, and thereby regulates metabolite flux through the tricarboxylic acid cycle, down-regulates aerobic respiration and inhibits the formation of acetyl-coenzyme A from pyruvate. Inhibition of pyruvate dehydrogenase decreases glucose utilization and increases fat metabolism in response to prolonged fasting and starvation. Plays an important role in maintaining normal blood glucose levels under starvation, and is involved in the insulin signaling cascade. Via its regulation of pyruvate dehydrogenase activity, plays an important role in maintaining normal blood pH and in preventing the accumulation of ketone bodies under starvation. In the fed state, mediates cellular responses to glucose levels and to a high-fat diet. Regulates both fatty acid oxidation and de novo fatty acid biosynthesis. Plays a role in the generation of reactive oxygen species. Protects detached epithelial cells against anoikis. Plays a role in cell proliferation via its role in regulating carbohydrate and fatty acid metabolism. In Homo sapiens (Human), this protein is [Pyruvate dehydrogenase (acetyl-transferring)] kinase isozyme 4, mitochondrial (PDK4).